A 422-amino-acid polypeptide reads, in one-letter code: Serine hydroxymethyltransferase (422 aa).

(6S)-5,6,7,8-tetrahydrofolate-binding positions include Leu-119 and Gly-123–Leu-125. Lys-228 bears the N6-(pyridoxal phosphate)lysine mark. Residues Glu-244 and Ser-352–Phe-354 contribute to the (6S)-5,6,7,8-tetrahydrofolate site.

It belongs to the SHMT family. In terms of assembly, homodimer. Pyridoxal 5'-phosphate is required as a cofactor.

It is found in the cytoplasm. The catalysed reaction is (6R)-5,10-methylene-5,6,7,8-tetrahydrofolate + glycine + H2O = (6S)-5,6,7,8-tetrahydrofolate + L-serine. The protein operates within one-carbon metabolism; tetrahydrofolate interconversion. Its pathway is amino-acid biosynthesis; glycine biosynthesis; glycine from L-serine: step 1/1. In terms of biological role, catalyzes the reversible interconversion of serine and glycine with tetrahydrofolate (THF) serving as the one-carbon carrier. This reaction serves as the major source of one-carbon groups required for the biosynthesis of purines, thymidylate, methionine, and other important biomolecules. Also exhibits THF-independent aldolase activity toward beta-hydroxyamino acids, producing glycine and aldehydes, via a retro-aldol mechanism. In Magnetococcus marinus (strain ATCC BAA-1437 / JCM 17883 / MC-1), this protein is Serine hydroxymethyltransferase.